Reading from the N-terminus, the 243-residue chain is F-box protein pof15 (243 aa).

In terms of domain architecture, F-box spans 28–73; it reads QTSSTLLPVEVIDSVMQYLPAHDVIQSSFASYPLTLIANKIIRARL.

It participates in protein modification; protein ubiquitination. Its function is as follows. Probable substrate recognition component of a SCF (SKP1-CUL1-F-box protein) E3 ubiquitin-protein ligase complex that mediates the ubiquitination and subsequent proteasomal degradation of target proteins. The chain is F-box protein pof15 (pof15) from Schizosaccharomyces pombe (strain 972 / ATCC 24843) (Fission yeast).